A 718-amino-acid chain; its full sequence is Ribosomal RNA large subunit methyltransferase K/L (718 aa).

The THUMP domain occupies Asp44–Leu155.

The protein belongs to the methyltransferase superfamily. RlmKL family.

Its subcellular location is the cytoplasm. The catalysed reaction is guanosine(2445) in 23S rRNA + S-adenosyl-L-methionine = N(2)-methylguanosine(2445) in 23S rRNA + S-adenosyl-L-homocysteine + H(+). It catalyses the reaction guanosine(2069) in 23S rRNA + S-adenosyl-L-methionine = N(2)-methylguanosine(2069) in 23S rRNA + S-adenosyl-L-homocysteine + H(+). Functionally, specifically methylates the guanine in position 2445 (m2G2445) and the guanine in position 2069 (m7G2069) of 23S rRNA. The protein is Ribosomal RNA large subunit methyltransferase K/L of Francisella philomiragia subsp. philomiragia (strain ATCC 25017 / CCUG 19701 / FSC 153 / O#319-036).